A 175-amino-acid chain; its full sequence is Cyclic pyranopterin monophosphate synthase (175 aa).

Substrate contacts are provided by residues 78-80 (LCH) and 125-126 (ME). D140 is a catalytic residue.

Belongs to the MoaC family. In terms of assembly, homohexamer; trimer of dimers.

The catalysed reaction is (8S)-3',8-cyclo-7,8-dihydroguanosine 5'-triphosphate = cyclic pyranopterin phosphate + diphosphate. Its pathway is cofactor biosynthesis; molybdopterin biosynthesis. Its function is as follows. Catalyzes the conversion of (8S)-3',8-cyclo-7,8-dihydroguanosine 5'-triphosphate to cyclic pyranopterin monophosphate (cPMP). This chain is Cyclic pyranopterin monophosphate synthase, found in Rhodopirellula baltica (strain DSM 10527 / NCIMB 13988 / SH1).